A 286-amino-acid chain; its full sequence is Acetyl-coenzyme A carboxylase carboxyl transferase subunit beta (286 aa).

The 264-residue stretch at 23–286 (IWVKCNNCNQ…ITNKPEPKKE (264 aa)) folds into the CoA carboxyltransferase N-terminal domain. Zn(2+) contacts are provided by cysteine 27, cysteine 30, cysteine 46, and cysteine 49. Residues 27 to 49 (CNNCNQMIYKIELEKNLEVCPKC) form a C4-type zinc finger.

Belongs to the AccD/PCCB family. As to quaternary structure, acetyl-CoA carboxylase is a heterohexamer composed of biotin carboxyl carrier protein (AccB), biotin carboxylase (AccC) and two subunits each of ACCase subunit alpha (AccA) and ACCase subunit beta (AccD). It depends on Zn(2+) as a cofactor.

Its subcellular location is the cytoplasm. It catalyses the reaction N(6)-carboxybiotinyl-L-lysyl-[protein] + acetyl-CoA = N(6)-biotinyl-L-lysyl-[protein] + malonyl-CoA. The protein operates within lipid metabolism; malonyl-CoA biosynthesis; malonyl-CoA from acetyl-CoA: step 1/1. Functionally, component of the acetyl coenzyme A carboxylase (ACC) complex. Biotin carboxylase (BC) catalyzes the carboxylation of biotin on its carrier protein (BCCP) and then the CO(2) group is transferred by the transcarboxylase to acetyl-CoA to form malonyl-CoA. This Wigglesworthia glossinidia brevipalpis protein is Acetyl-coenzyme A carboxylase carboxyl transferase subunit beta.